Reading from the N-terminus, the 130-residue chain is Histone H2A type 2-B (130 aa).

The disordered stretch occupies residues 1–22; the sequence is MSGRGKQGGKARAKAKSRSSRA. At S2 the chain carries N-acetylserine. S2 is modified (phosphoserine; by RPS6KA5). R4 is subject to Citrulline; alternate. At R4 the chain carries Symmetric dimethylarginine; by PRMT5; alternate. At K6 the chain carries N6-(2-hydroxyisobutyryl)lysine. Residues 7 to 19 are compositionally biased toward basic residues; the sequence is QGGKARAKAKSRS. Position 10 is an N6-(2-hydroxyisobutyryl)lysine; alternate (K10). An N6-(beta-hydroxybutyryl)lysine; alternate mark is found at K10 and K14. Position 10 is an N6-lactoyllysine; alternate (K10). K10 carries the post-translational modification N6-succinyllysine; alternate. K14 participates in a covalent cross-link: Glycyl lysine isopeptide (Lys-Gly) (interchain with G-Cter in ubiquitin); alternate. Residue K16 forms a Glycyl lysine isopeptide (Lys-Gly) (interchain with G-Cter in ubiquitin) linkage. K37 is subject to N6-(2-hydroxyisobutyryl)lysine; alternate. N6-(beta-hydroxybutyryl)lysine; alternate is present on K37. Residue K37 is modified to N6-crotonyllysine; alternate. Residues K75 and K76 each carry the N6-(2-hydroxyisobutyryl)lysine modification. At K96 the chain carries N6-(2-hydroxyisobutyryl)lysine; alternate. K96 is subject to N6-(beta-hydroxybutyryl)lysine; alternate. The residue at position 96 (K96) is an N6-succinyllysine; alternate. An N6-glutaryllysine; alternate modification is found at K96. Position 105 is an N5-methylglutamine (Q105). Residue K119 is modified to N6-(2-hydroxyisobutyryl)lysine; alternate. An N6-(beta-hydroxybutyryl)lysine; alternate modification is found at K119. N6-crotonyllysine; alternate occurs at positions 119 and 120. N6-glutaryllysine; alternate is present on residues K119 and K120. K120 is covalently cross-linked (Glycyl lysine isopeptide (Lys-Gly) (interchain with G-Cter in ubiquitin); alternate). T121 carries the post-translational modification Phosphothreonine; by DCAF1.

This sequence belongs to the histone H2A family. As to quaternary structure, the nucleosome is a histone octamer containing two molecules each of H2A, H2B, H3 and H4 assembled in one H3-H4 heterotetramer and two H2A-H2B heterodimers. The octamer wraps approximately 147 bp of DNA. In terms of processing, deiminated on Arg-4 in granulocytes upon calcium entry. Post-translationally, monoubiquitination of Lys-120 (H2AK119Ub) by RING1, TRIM37 and RNF2/RING2 complex gives a specific tag for epigenetic transcriptional repression and participates in X chromosome inactivation of female mammals. It is involved in the initiation of both imprinted and random X inactivation. Ubiquitinated H2A is enriched in inactive X chromosome chromatin. Ubiquitination of H2A functions downstream of methylation of 'Lys-27' of histone H3 (H3K27me). H2AK119Ub by RNF2/RING2 can also be induced by ultraviolet and may be involved in DNA repair. Monoubiquitination of Lys-120 (H2AK119Ub) by TRIM37 may promote transformation of cells in a number of breast cancers. Following DNA double-strand breaks (DSBs), it is ubiquitinated through 'Lys-63' linkage of ubiquitin moieties by the E2 ligase UBE2N and the E3 ligases RNF8 and RNF168, leading to the recruitment of repair proteins to sites of DNA damage. Ubiquitination at Lys-14 and Lys-16 (H2AK13Ub and H2AK15Ub, respectively) in response to DNA damage is initiated by RNF168 that mediates monoubiquitination at these 2 sites, and 'Lys-63'-linked ubiquitin are then conjugated to monoubiquitin; RNF8 is able to extend 'Lys-63'-linked ubiquitin chains in vitro. Deubiquitinated by USP51 at Lys-14 and Lys-16 (H2AK13Ub and H2AK15Ub, respectively) after damaged DNA is repaired. H2AK119Ub and ionizing radiation-induced 'Lys-63'-linked ubiquitination (H2AK13Ub and H2AK15Ub) are distinct events. Phosphorylation on Ser-2 (H2AS1ph) is enhanced during mitosis. Phosphorylation on Ser-2 by RPS6KA5/MSK1 directly represses transcription. Acetylation of H3 inhibits Ser-2 phosphorylation by RPS6KA5/MSK1. Phosphorylation at Thr-121 (H2AT120ph) by DCAF1 is present in the regulatory region of many tumor suppresor genes and down-regulates their transcription. In terms of processing, symmetric dimethylation on Arg-4 by the PRDM1/PRMT5 complex may play a crucial role in the germ-cell lineage. Post-translationally, glutamine methylation at Gln-105 (H2AQ104me) by FBL is specifically dedicated to polymerase I. It is present at 35S ribosomal DNA locus and impairs binding of the FACT complex. Crotonylation (Kcr) is specifically present in male germ cells and marks testis-specific genes in post-meiotic cells, including X-linked genes that escape sex chromosome inactivation in haploid cells. Crotonylation marks active promoters and enhancers and confers resistance to transcriptional repressors. It is also associated with post-meiotically activated genes on autosomes. In terms of processing, lactylated in macrophages by EP300/P300 by using lactoyl-CoA directly derived from endogenous or exogenous lactate, leading to stimulates gene transcription.

It is found in the nucleus. Its subcellular location is the chromosome. In terms of biological role, core component of nucleosome. Nucleosomes wrap and compact DNA into chromatin, limiting DNA accessibility to the cellular machineries which require DNA as a template. Histones thereby play a central role in transcription regulation, DNA repair, DNA replication and chromosomal stability. DNA accessibility is regulated via a complex set of post-translational modifications of histones, also called histone code, and nucleosome remodeling. This chain is Histone H2A type 2-B, found in Homo sapiens (Human).